Reading from the N-terminus, the 440-residue chain is MAVIQITSDDTWQIQADGHPLRGTLQVPGDKSISHRALMLGAMAEGTTQITGLLVGEDTCSTASCFRALGAEISPLNATAVTVQGLGMGRLQEPGDVMNAGNSGTTMRLLLGVLAAQTGRFFTLTGDASLRSRPMARVVTPLLQMGAQIWGRQHHSRAPLAILGQPLEPITYYSPIASAQVKSALLLAALHTEGTTLIREPHRSRDHSERMLQAFGARLSVDEATCTVSLEGPAVLKGQKVIVPGDISSAAFWLVAASIIPDSELLLTNVGVNPTRTGILDVLWAMGAEITLENERLVTGEPVADLRVRSARLKSTRIGGELIPRLIDEIPILAVAAAFAEGVTEIRDAAELRVKESDRLKAVATELQKMGAKVTELSDGLDIQGGGPLQGTHLETYGDHRMAMSLAIAALNAKGTSEIHNASAAAVSYPEFVTVLQQIA.

3-phosphoshikimate contacts are provided by Lys-31, Ser-32, and Arg-36. Phosphoenolpyruvate is bound at residue Lys-31. Gly-104 and Arg-133 together coordinate phosphoenolpyruvate. Ser-178, Gln-180, Asp-328, and Lys-355 together coordinate 3-phosphoshikimate. Residue Gln-180 coordinates phosphoenolpyruvate. Asp-328 (proton acceptor) is an active-site residue. The phosphoenolpyruvate site is built by Arg-359 and Arg-401.

The protein belongs to the EPSP synthase family. As to quaternary structure, monomer.

It localises to the cytoplasm. It carries out the reaction 3-phosphoshikimate + phosphoenolpyruvate = 5-O-(1-carboxyvinyl)-3-phosphoshikimate + phosphate. It functions in the pathway metabolic intermediate biosynthesis; chorismate biosynthesis; chorismate from D-erythrose 4-phosphate and phosphoenolpyruvate: step 6/7. Its function is as follows. Catalyzes the transfer of the enolpyruvyl moiety of phosphoenolpyruvate (PEP) to the 5-hydroxyl of shikimate-3-phosphate (S3P) to produce enolpyruvyl shikimate-3-phosphate and inorganic phosphate. This Thermosynechococcus vestitus (strain NIES-2133 / IAM M-273 / BP-1) protein is 3-phosphoshikimate 1-carboxyvinyltransferase.